The following is a 472-amino-acid chain: 3-isopropylmalate dehydratase large subunit (472 aa).

3 residues coordinate [4Fe-4S] cluster: C350, C411, and C414.

The protein belongs to the aconitase/IPM isomerase family. LeuC type 1 subfamily. In terms of assembly, heterodimer of LeuC and LeuD. [4Fe-4S] cluster is required as a cofactor.

The catalysed reaction is (2R,3S)-3-isopropylmalate = (2S)-2-isopropylmalate. It participates in amino-acid biosynthesis; L-leucine biosynthesis; L-leucine from 3-methyl-2-oxobutanoate: step 2/4. Its function is as follows. Catalyzes the isomerization between 2-isopropylmalate and 3-isopropylmalate, via the formation of 2-isopropylmaleate. This chain is 3-isopropylmalate dehydratase large subunit, found in Alcanivorax borkumensis (strain ATCC 700651 / DSM 11573 / NCIMB 13689 / SK2).